The primary structure comprises 256 residues: (E)-benzylidenesuccinyl-CoA hydratase (256 aa).

The active-site Nucleophile is glutamate 110. Residue glutamate 130 is the Proton acceptor of the active site.

It belongs to the enoyl-CoA hydratase/isomerase family. Homotrimer.

It catalyses the reaction (2S)-[(R)-hydroxy(phenyl)methyl]succinyl-CoA = (E)-2-benzylidenesuccinyl-CoA + H2O. It functions in the pathway xenobiotic degradation; toluene degradation. Functionally, involved in an anaerobic toluene degradation pathway. Catalyzes the hydration of (E)-2-benzylidenesuccinyl-CoA to the corresponding alcohol intermediate, 2-(alpha-hydroxybenzyl)succinyl-CoA. Also accepts the N-acetylcysteamine (NAC) thioester of (E)-benzylidenesuccinate. The sequence is that of (E)-benzylidenesuccinyl-CoA hydratase from Thauera aromatica.